The sequence spans 495 residues: Lysine--tRNA ligase (495 aa).

Positions 406 and 413 each coordinate Mg(2+).

Belongs to the class-II aminoacyl-tRNA synthetase family. As to quaternary structure, homodimer. Mg(2+) serves as cofactor.

Its subcellular location is the cytoplasm. It carries out the reaction tRNA(Lys) + L-lysine + ATP = L-lysyl-tRNA(Lys) + AMP + diphosphate. The sequence is that of Lysine--tRNA ligase from Staphylococcus aureus (strain COL).